A 336-amino-acid polypeptide reads, in one-letter code: Terephthalate 1,2-dioxygenase, reductase component 1 (336 aa).

The 2Fe-2S ferredoxin-type domain maps to 3–91 (HQIHIHDSDI…DIRIQPSSFR (89 aa)). [2Fe-2S] cluster is bound by residues Cys-37, Cys-42, Cys-45, and Cys-75. Residues 98–197 (RKRFTAKVYS…ELPFGSIALK (100 aa)) enclose the FAD-binding FR-type domain.

In terms of assembly, monomer. Part of a multicomponent enzyme system composed of a reductase (TphA1I or TphA1II) and a two-subunit oxygenase component (TphA2I or TphA2II and TphA3I or TphA3II). FAD serves as cofactor. The cofactor is [2Fe-2S] cluster.

The catalysed reaction is terephthalate + NADH + O2 + H(+) = (3S,4R)-3,4-dihydroxycyclohexa-1,5-diene-1,4-dicarboxylate + NAD(+). Functionally, component of the terephthalate 1,2-dioxygenase multicomponent enzyme system which catalyzes the dioxygenation of terephthalate (TER/TPA) to 1,2-dihydroxy-3,5-cyclohexadiene-1,4-dicarboxylic acid (DCD). TphA1 probably reduces TphA2A3. It can also use 2,5-dicarboxypyridine (PDC) and 1,4-napthalenedicarboxylic acid (NDC) as substrates, and preferentially uses NADPH which is the physiological electron donor. This chain is Terephthalate 1,2-dioxygenase, reductase component 1 (tphA1I), found in Comamonas sp.